A 135-amino-acid polypeptide reads, in one-letter code: Fluoride-specific ion channel FluC (135 aa).

The next 4 helical transmembrane spans lie at 12–32, 42–62, 70–90, and 106–126; these read FLVIGLGAAFGAWTRWLLGLS, LGTLAANVIGGYLVGVAVGIF, LAWKLFAITGFLGGLTTFSTF, and AIGLASVHLAGSLTATYLGLL. The Na(+) site is built by glycine 82 and threonine 85.

The protein belongs to the fluoride channel Fluc/FEX (TC 1.A.43) family.

Its subcellular location is the cell inner membrane. It carries out the reaction fluoride(in) = fluoride(out). Na(+) is not transported, but it plays an essential structural role and its presence is essential for fluoride channel function. Fluoride-specific ion channel. Important for reducing fluoride concentration in the cell, thus reducing its toxicity. This chain is Fluoride-specific ion channel FluC, found in Dechloromonas aromatica (strain RCB).